Reading from the N-terminus, the 260-residue chain is Snake venom serine protease gussurobin (260 aa).

The N-terminal stretch at 1-18 (MVLIRVLANLLILQLSYA) is a signal peptide. Residues 19 to 24 (QKSSEL) constitute a propeptide that is removed on maturation. A Peptidase S1 domain is found at 25 to 251 (IIGGDECNIN…YTEWIQSTIA (227 aa)). 6 disulfides stabilise this stretch: cysteine 31-cysteine 165, cysteine 52-cysteine 68, cysteine 100-cysteine 258, cysteine 144-cysteine 212, cysteine 176-cysteine 191, and cysteine 202-cysteine 227. Active-site charge relay system residues include histidine 67 and aspartate 112. Asparagine 123 and asparagine 124 each carry an N-linked (GlcNAc...) asparagine glycan. The Charge relay system role is filled by serine 206.

The protein belongs to the peptidase S1 family. Snake venom subfamily. In terms of assembly, monomer. As to expression, expressed by the venom gland.

The protein localises to the secreted. Its function is as follows. Snake venom serine protease that may act in the hemostasis system of the prey. In Gloydius ussuriensis (Ussuri mamushi), this protein is Snake venom serine protease gussurobin.